The primary structure comprises 375 residues: Alanine racemase (375 aa).

The active-site Proton acceptor; specific for D-alanine is the Lys-35. An N6-(pyridoxal phosphate)lysine modification is found at Lys-35. Substrate is bound at residue Arg-130. Tyr-253 acts as the Proton acceptor; specific for L-alanine in catalysis. Residue Met-305 coordinates substrate.

This sequence belongs to the alanine racemase family. Requires pyridoxal 5'-phosphate as cofactor.

The enzyme catalyses L-alanine = D-alanine. It functions in the pathway amino-acid biosynthesis; D-alanine biosynthesis; D-alanine from L-alanine: step 1/1. Its function is as follows. Catalyzes the interconversion of L-alanine and D-alanine. May also act on other amino acids. The chain is Alanine racemase (alr) from Ralstonia nicotianae (strain ATCC BAA-1114 / GMI1000) (Ralstonia solanacearum).